The primary structure comprises 235 residues: Sugar fermentation stimulation protein homolog (235 aa).

This sequence belongs to the SfsA family.

The protein is Sugar fermentation stimulation protein homolog of Serratia proteamaculans (strain 568).